A 238-amino-acid chain; its full sequence is Probable 2-phosphosulfolactate phosphatase (238 aa).

This sequence belongs to the ComB family. Requires Mg(2+) as cofactor.

It carries out the reaction (2R)-O-phospho-3-sulfolactate + H2O = (2R)-3-sulfolactate + phosphate. The polypeptide is Probable 2-phosphosulfolactate phosphatase (Clostridium botulinum (strain Eklund 17B / Type B)).